Reading from the N-terminus, the 785-residue chain is MADLDSPPKLSGVQQPSEGVGGGRCSEISAELIRSLTELQELEAVYERLCGEEKVVERELDALLEQQNTIESKMVTLHRMGPNLQLIEGDAKQLAGMITFTCNLAENVSSKVRQLDLAKNRLYQAIQRADDILDLKFCMDGVQTALRSEDYEQAAAHTHRYLCLDKSVIELSRQGKEGSMIDANLKLLQEAEQRLKAIVAEKFAIATKEGDLPQVERFFKIFPLLGLHEEGLRKFSEYLCKQVASKAEENLLMVLGTDMSDRRAAVIFADTLTLLFEGIARIVETHQPIVETYYGPGRLYTLIKYLQVECDRQVEKVVDKFIKQRDYHQQFRHVQNNLMRNSTTEKIEPRELDPILTEVTLMNARSELYLRFLKKRISSDFEVGDSMASEEVKQEHQKCLDKLLNNCLLSCTMQELIGLYVTMEEYFMRETVNKAVALDTYEKGQLTSSMVDDVFYIVKKCIGRALSSSSIDCLCAMINLATTELESDFRDVLCNKLRMGFPATTFQDIQRGVTSAVNIMHSSLQQGKFDTKGIESTDEAKMSFLVTLNNVEVCSENISTLKKTLESDCTKLFSQGIGGEQAQAKFDSCLSDLAAVSNKFRDLLQEGLTELNSTAIKPQVQPWINSFFSVSHNIEEEEFNDYEANDPWVQQFILNLEQQMAEFKASLSPVIYDSLTGLMTSLVAVELEKVVLKSTFNRLGGLQFDKELRSLIAYLTTVTTWTIRDKFARLSQMATILNLERVTEILDYWGPNSGPLTWRLTPAEVRQVLALRIDFRSEDIKRLRL.

The tract at residues 1–24 is disordered; the sequence is MADLDSPPKLSGVQQPSEGVGGGR. N-acetylalanine is present on alanine 2. An interaction with SCFD1 region spans residues 2 to 84; that stretch reads ADLDSPPKLS…VTLHRMGPNL (83 aa). Phosphoserine is present on serine 6. Positions 85 to 153 are interaction with STX5; that stretch reads QLIEGDAKQL…TALRSEDYEQ (69 aa). Positions 618–740 are d domain; it reads PQVQPWINSF…SQMATILNLE (123 aa). The e domain; essential for proper cell surface glycosylation stretch occupies residues 741 to 785; the sequence is RVTEILDYWGPNSGPLTWRLTPAEVRQVLALRIDFRSEDIKRLRL.

This sequence belongs to the COG4 family. Monomer. Component of the conserved oligomeric Golgi (COG) complex which is composed of eight different subunits and is required for normal Golgi morphology and localization. Mediates interaction of SCFD1 with the COG complex. Interacts with STX5.

It is found in the cytoplasm. Its subcellular location is the cytosol. The protein localises to the golgi apparatus membrane. Functionally, required for normal Golgi function. Plays a role in SNARE-pin assembly and Golgi-to-ER retrograde transport via its interaction with SCFD1. The polypeptide is Conserved oligomeric Golgi complex subunit 4 (COG4) (Homo sapiens (Human)).